The following is a 402-amino-acid chain: LIM/homeobox protein Lhx5 (402 aa).

LIM zinc-binding domains follow at residues 3 to 61 (VHCA…RRFG) and 62 to 125 (TKCA…SSSL). The span at 124–135 (SLKEGSLNSVSS) shows a compositional bias: low complexity. Disordered stretches follow at residues 124–186 (SLKE…PRTT) and 298–402 (HGPP…AAVW). Over residues 151 to 167 (DDPKETDNSTSSDKETA) the composition is skewed to basic and acidic residues. A DNA-binding region (homeobox) is located at residues 180–239 (RRGPRTTIKAKQLETLKAAFAATPKPTRHIREQLAQETGLNMRVIQVWFQNRRSKERRMK). Low complexity-rich tracts occupy residues 300 to 311 (PPSQAQSPADSS) and 322 to 336 (PLGA…PHAA).

As to expression, expressed in fetal brain and in various regions of the adult central nervous system including the spinal cord, the thalamus, and the cerebellum.

Its subcellular location is the nucleus. Functionally, plays an essential role in the regulation of neuronal differentiation and migration during development of the central nervous system. In Homo sapiens (Human), this protein is LIM/homeobox protein Lhx5 (LHX5).